The following is a 388-amino-acid chain: Quinolone resistance protein NorA (388 aa).

The next 12 membrane-spanning stretches (helical) occupy residues 5 to 25 (IFVLYFNIFLIFLGIGLVIPV), 42 to 62 (LLVAAFALSQMIISPFGGTLA), 69 to 89 (LIICIGLILFSVSEFMFAVGH), 99 to 119 (VIGGMSAGMVMPGVTGLIADI), 129 to 149 (FGYMSAIINSGFILGPGIGGF), 157 to 177 (MPFYFAGALGILAFIMSIVLI), 201 to 221 (WKVFITPVILTLVLSFGLSAF), 239 to 259 (DISIAITGGGIFGALFQIYFF), 269 to 289 (LTFIAWSLLYSVVVLILLVFA), 293 to 313 (WSIMLISFVVFIGFDMIRPAI), 331 to 351 (LNSTFTSMGNFIGPLIAGALF), and 355 to 375 (IEAPIYMAIGVSLAGVVIVLI).

Belongs to the major facilitator superfamily. TCR/Tet family.

Its subcellular location is the cell membrane. In terms of biological role, involved in quinolone resistance. May constitute a membrane-associated active efflux pump of hydrophilic quinolones. The polypeptide is Quinolone resistance protein NorA (norA) (Staphylococcus aureus (strain Mu50 / ATCC 700699)).